The sequence spans 411 residues: Dihydrosphingosine 1-phosphate phosphatase C823.11 (411 aa).

The Lumenal segment spans residues 1 to 74 (MVHKKKNVDI…LDVYFMYTAT (74 aa)). A helical transmembrane segment spans residues 75-95 (LGTHVFFMLALPIFFWSGCIY). The Cytoplasmic portion of the chain corresponds to 96 to 99 (YTLD). A helical transmembrane segment spans residues 100 to 120 (ITQLFAAGVYFSGCIKDYFCL). Residues 115–123 (KDYFCLPRP) are phosphatase sequence motif I. The Lumenal segment spans residues 121–170 (PRPRSPPMVRLTLSSDAEYEYGFPSTHTTNAMATGFYSLFLLLSMSDSMS). The interval 144–147 (PSTH) is phosphatase sequence motif II. Residue H147 is the Proton donor of the active site. A helical transmembrane segment spans residues 171–191 (SISYYFLLSLVLLYIASISLG). The segment at 191–202 (GRIYCGMHGFMD) is phosphatase sequence motif III. The Cytoplasmic segment spans residues 192 to 195 (RIYC). The chain crosses the membrane as a helical span at residues 196 to 216 (GMHGFMDVSTGTILGVTLAIF). The Nucleophile role is filled by H198. Over 217–233 (QWKYADFFHNVWSSSST) the chain is Lumenal. Residues 234 to 254 (SVPILSVVLALFFIWFHPQPA) traverse the membrane as a helical segment. Residues 255–259 (ERCIC) lie on the Cytoplasmic side of the membrane. The helical transmembrane segment at 260 to 280 (LEDSISFISVIMGIDLGTWFA) threads the bilayer. The Lumenal segment spans residues 281–293 (SPESLSHLHDNLN). Residues 294 to 314 (SYFLLKFFVRVLFGVCMILIW) traverse the membrane as a helical segment. Residues 315–387 (KSFAKQALLA…VRFDIETIAR (73 aa)) are Cytoplasmic-facing. Residues 388–408 (IIVYSGIGFLCTYFAPKVFLK) form a helical membrane-spanning segment. The Lumenal segment spans residues 409–411 (WKI).

The protein belongs to the type 2 lipid phosphate phosphatase family.

It is found in the endoplasmic reticulum membrane. Functionally, dihydrosphingosine 1-phosphate phosphatase required for efficient ceramide synthesis from exogenous sphingoid bases. Involved in endocytosis and calcium-mediated signaling. This Schizosaccharomyces pombe (strain 972 / ATCC 24843) (Fission yeast) protein is Dihydrosphingosine 1-phosphate phosphatase C823.11.